The sequence spans 580 residues: Phosphatase and actin regulator 1 (580 aa).

Phosphoserine occurs at positions 67 and 78. Thr-104 is modified (phosphothreonine). The Nuclear localization signal motif lies at 108–129; sequence RRRSKFANLGRIFKPWKWRKKK. An RPEL 1 repeat occupies 138–163; the sequence is AALERKISMRQSREELIKRGVLKEIY. Disordered regions lie at residues 330–350 and 374–408; these read SEQR…SSDG and DNKE…DDAS. A compositionally biased stretch (low complexity) spans 337–348; that stretch reads STSYHSSGLHSS. Positions 374-383 are enriched in basic and acidic residues; it reads DNKENVPHEP. Acidic residues predominate over residues 395-407; that stretch reads EEEEEEEDEDDDA. 3 RPEL repeats span residues 422-447, 460-485, and 498-523; these read DSLA…PRQT, TKLT…KPRN, and RRLT…IRFS. Residues 463–494 form a disordered region; sequence TRRLSQRPTAEELEQRNILKPRNEQEEQEEKR. Ser-467 is modified (phosphoserine). Residues 471 to 494 are compositionally biased toward basic and acidic residues; it reads TAEELEQRNILKPRNEQEEQEEKR. Ser-505 is subject to Phosphoserine.

Belongs to the phosphatase and actin regulator family. As to quaternary structure, interacts (via RPEL repeats) with ACTA1 and PPP1CA; ACTA1 and PPP1CA compete for the same binding site.

The protein localises to the cytoplasm. Its subcellular location is the synapse. It localises to the nucleus. Its function is as follows. Binds actin monomers (G actin) and plays a role in multiple processes including the regulation of actin cytoskeleton dynamics, actin stress fibers formation, cell motility and survival, formation of tubules by endothelial cells, and regulation of PPP1CA activity. Involved in the regulation of cortical neuron migration and dendrite arborization. The protein is Phosphatase and actin regulator 1 (Phactr1) of Mus musculus (Mouse).